The following is a 447-amino-acid chain: Probable ethanolamine kinase B (447 aa).

A compositionally biased stretch (low complexity) spans 178 to 208 (STTISTSTSTSTSTSSTSPSTSPSLENSTLS). The segment at 178 to 217 (STTISTSTSTSTSTSSTSPSTSPSLENSTLSPRNMNTQTS) is disordered.

It belongs to the choline/ethanolamine kinase family.

Its subcellular location is the cytoplasm. It carries out the reaction ethanolamine + ATP = phosphoethanolamine + ADP + H(+). The protein operates within phospholipid metabolism; phosphatidylethanolamine biosynthesis; phosphatidylethanolamine from ethanolamine: step 1/3. In terms of biological role, highly specific for ethanolamine phosphorylation. May be a rate-controlling step in phosphatidylethanolamine biosynthesis. The chain is Probable ethanolamine kinase B (etnkB) from Dictyostelium discoideum (Social amoeba).